The following is a 500-amino-acid chain: L-arabinose isomerase (500 aa).

Residues Glu-306, Glu-333, His-350, and His-450 each contribute to the Mn(2+) site.

Belongs to the arabinose isomerase family. In terms of assembly, homohexamer. The cofactor is Mn(2+).

It catalyses the reaction beta-L-arabinopyranose = L-ribulose. Its pathway is carbohydrate degradation; L-arabinose degradation via L-ribulose; D-xylulose 5-phosphate from L-arabinose (bacterial route): step 1/3. In terms of biological role, catalyzes the conversion of L-arabinose to L-ribulose. In Yersinia pseudotuberculosis serotype I (strain IP32953), this protein is L-arabinose isomerase.